A 476-amino-acid chain; its full sequence is Bifunctional protein GlmU (476 aa).

Residues 1-232 (MDNLAAIILA…PVEVMGINDR (232 aa)) form a pyrophosphorylase region. Residues 9 to 12 (LAAG), Lys23, Gln75, and 80 to 81 (GT) contribute to the UDP-N-acetyl-alpha-D-glucosamine site. Asp105 is a binding site for Mg(2+). UDP-N-acetyl-alpha-D-glucosamine contacts are provided by Gly142, Glu157, Asn172, and Asn230. Mg(2+) is bound at residue Asn230. A linker region spans residues 233–253 (VQLAEAARHARRRIAEEHMLN). The tract at residues 254–476 (GVTLVDPAAT…EGWKLRKRDQ (223 aa)) is N-acetyltransferase. UDP-N-acetyl-alpha-D-glucosamine contacts are provided by Arg353 and Lys371. Residue His383 is the Proton acceptor of the active site. UDP-N-acetyl-alpha-D-glucosamine-binding residues include Tyr386 and Asn397. Residues 406-407 (NY), Ser425, Ala443, and Arg460 each bind acetyl-CoA.

It in the N-terminal section; belongs to the N-acetylglucosamine-1-phosphate uridyltransferase family. In the C-terminal section; belongs to the transferase hexapeptide repeat family. As to quaternary structure, homotrimer. Requires Mg(2+) as cofactor.

The protein localises to the cytoplasm. The enzyme catalyses alpha-D-glucosamine 1-phosphate + acetyl-CoA = N-acetyl-alpha-D-glucosamine 1-phosphate + CoA + H(+). The catalysed reaction is N-acetyl-alpha-D-glucosamine 1-phosphate + UTP + H(+) = UDP-N-acetyl-alpha-D-glucosamine + diphosphate. It functions in the pathway nucleotide-sugar biosynthesis; UDP-N-acetyl-alpha-D-glucosamine biosynthesis; N-acetyl-alpha-D-glucosamine 1-phosphate from alpha-D-glucosamine 6-phosphate (route II): step 2/2. Its pathway is nucleotide-sugar biosynthesis; UDP-N-acetyl-alpha-D-glucosamine biosynthesis; UDP-N-acetyl-alpha-D-glucosamine from N-acetyl-alpha-D-glucosamine 1-phosphate: step 1/1. The protein operates within bacterial outer membrane biogenesis; LPS lipid A biosynthesis. Functionally, catalyzes the last two sequential reactions in the de novo biosynthetic pathway for UDP-N-acetylglucosamine (UDP-GlcNAc). The C-terminal domain catalyzes the transfer of acetyl group from acetyl coenzyme A to glucosamine-1-phosphate (GlcN-1-P) to produce N-acetylglucosamine-1-phosphate (GlcNAc-1-P), which is converted into UDP-GlcNAc by the transfer of uridine 5-monophosphate (from uridine 5-triphosphate), a reaction catalyzed by the N-terminal domain. This is Bifunctional protein GlmU from Geobacter sulfurreducens (strain ATCC 51573 / DSM 12127 / PCA).